Reading from the N-terminus, the 169-residue chain is MASTQNIVEEVQKMLDTYDTNKDGEITKAEAVEYFKGKKAFNPERSAIYLFQVYDKDNDGKITIKELAGDIDFDKALKEYKEKQAKSKQQEAEVEEDIEAFILRHNKDDNTDITKDELIQGFKETGAKDPEKSANFILTEMDTNKDGTITVKELRVYYQKVQKLLNPDQ.

EF-hand domains lie at 6-41 (NIVE…KKAF), 42-77 (NPER…DKAL), 93-128 (EVEE…TGAK), and 129-164 (DPEK…VQKL). Residues D19, N21, D23, E25, E30, D55, D57, D59, K61, E66, D108, N110, D112, E117, D142, N144, D146, T148, and E153 each contribute to the Ca(2+) site.

In terms of biological role, may be involved in the phase-shift of cells from growth to differentiation. This is Calfumirin-1 (cafA) from Dictyostelium discoideum (Social amoeba).